The chain runs to 206 residues: Ribosomal RNA large subunit methyltransferase E (206 aa).

S-adenosyl-L-methionine-binding residues include G60, W62, D80, D96, and D121. Residue K161 is the Proton acceptor of the active site.

The protein belongs to the class I-like SAM-binding methyltransferase superfamily. RNA methyltransferase RlmE family.

The protein resides in the cytoplasm. The enzyme catalyses uridine(2552) in 23S rRNA + S-adenosyl-L-methionine = 2'-O-methyluridine(2552) in 23S rRNA + S-adenosyl-L-homocysteine + H(+). Specifically methylates the uridine in position 2552 of 23S rRNA at the 2'-O position of the ribose in the fully assembled 50S ribosomal subunit. This is Ribosomal RNA large subunit methyltransferase E from Nitrosomonas eutropha (strain DSM 101675 / C91 / Nm57).